We begin with the raw amino-acid sequence, 496 residues long: L-arabinose isomerase (496 aa).

Mn(2+) is bound by residues Glu-306, Glu-331, His-348, and His-447.

Belongs to the arabinose isomerase family. The cofactor is Mn(2+).

The enzyme catalyses beta-L-arabinopyranose = L-ribulose. The protein operates within carbohydrate degradation; L-arabinose degradation via L-ribulose; D-xylulose 5-phosphate from L-arabinose (bacterial route): step 1/3. Catalyzes the conversion of L-arabinose to L-ribulose. The polypeptide is L-arabinose isomerase (Geobacillus thermodenitrificans (strain NG80-2)).